Consider the following 6857-residue polypeptide: Replicase polyprotein 1ab (6857 aa).

Residues 1679-1860 enclose the Macro domain; the sequence is FEQYYEFKIG…QYNQAFAVIK (182 aa). The segment at 2158–2191 is disordered; the sequence is QVGQGGQQDGQVDQQIKESEQVVEPSAPSGQESP. Transmembrane regions (helical) follow at residues 2303 to 2323, 2330 to 2350, 2385 to 2405, 2535 to 2555, 2639 to 2659, 2664 to 2684, 2889 to 2909, 3057 to 3077, 3106 to 3126, and 3142 to 3162; these read LTYN…FGVL, TPFY…LMIW, LVQW…DYVV, LFYS…YVLF, VTVS…VVVL, FIWF…IILF, TTLV…LMVG, IISP…FLIL, VLFV…LALW, and LFIL…GFVF. The segment at 2303-2683 is HD1; it reads LTYNIKFKLI…VMMPVFVIIL (381 aa). The tract at residues 2889–3162 is HD2; sequence TTLVIVMGVL…FLFMVGGFVF (274 aa). Active-site charge relay system; for 3C-like serine proteinase activity residues include histidine 3304, glutamate 3347, and serine 3416. The interval 3555 to 3738 is HD3; sequence HLHFIFSIYF…IVIVLSFRVF (184 aa). A run of 7 helical transmembrane segments spans residues 3556–3575, 3580–3602, 3611–3631, 3640–3660, 3663–3683, 3698–3718, and 3723–3738; these read LHFI…YWWL, SVVL…NVLF, LAVT…LGFL, SLII…VVNV, AIFV…LGIV, AVFT…LLLF, and LMSF…FRVF. The NiRAN domain maps to 4566–4797; that stretch reads DFKLLRGAWS…ANEMEIPTDY (232 aa). Residues 5105-5256 form the RdRp catalytic domain; the sequence is FDVFGSDYTK…FSKPEALKIF (152 aa). Residues 5413 to 5528 form the CV ZBD domain; it reads FDKVCFCCPN…NGVAQLLTSV (116 aa). Zn(2+) contacts are provided by cysteine 5417, cysteine 5420, cysteine 5428, cysteine 5431, cysteine 5438, cysteine 5441, histidine 5445, histidine 5451, cysteine 5460, cysteine 5462, cysteine 5483, and cysteine 5486. Positions 5633-5812 constitute a (+)RNA virus helicase ATP-binding domain; that stretch reads NQPWRLATCF…LQLATQKRYL (180 aa). One can recognise a (+)RNA virus helicase C-terminal domain in the interval 5813 to 5972; that stretch reads TACYRCPPQI…FGMEKQSDFN (160 aa). The 214-residue stretch at 5970-6183 folds into the ExoN domain; that stretch reads DFNIIPEVSS…YLASYEAAFK (214 aa). Catalysis depends on residues aspartate 5984, glutamate 5986, and aspartate 6085. Positions 6149, 6153, and 6157 each coordinate Zn(2+). Catalysis depends on residues histidine 6161 and aspartate 6166. Residue cysteine 6172 coordinates Zn(2+). Residues 6451–6591 form the NendoU domain; it reads LPDTLFSTGR…GEDDIQTFYP (141 aa). Catalysis depends on residues histidine 6487, histidine 6504, lysine 6536, lysine 6633, aspartate 6709, lysine 6737, and glutamate 6771. One can recognise a Nidovirus-type SAM-dependent 2'-O-MTase domain in the interval 6593–6857; that stretch reads KDFVRSYYEW…EVPMLCQMEH (265 aa).

Post-translationally, specific enzymatic cleavages in vivo by its own protease yield mature proteins. 3CL-PRO is autocatalytically processed.

It localises to the host membrane. The enzyme catalyses RNA(n) + a ribonucleoside 5'-triphosphate = RNA(n+1) + diphosphate. It catalyses the reaction ATP + H2O = ADP + phosphate + H(+). Its function is as follows. The 3C-like serine proteinase is responsible for the majority of cleavages. In terms of biological role, the helicase which contains a zinc finger structure displays RNA and DNA duplex-unwinding activities with 5' to 3' polarity. Acts on both ssRNA and dsRNA in a 3' to 5' direction. Functionally, nendoU is a Mn(2+)-dependent, uridylate-specific enzyme, which leaves 2'-3'-cyclic phosphates 5' to the cleaved bond. The polypeptide is Replicase polyprotein 1ab (rep) (Equus caballus (Horse)).